Reading from the N-terminus, the 549-residue chain is Eukaryotic translation initiation factor 3 subunit D (549 aa).

The segment at 101-130 (QSYQRGRARGQRGRGARGARTPGGMTTLNK) is disordered. Residues 106–117 (GRARGQRGRGAR) show a composition bias toward basic residues. Residues 277–291 (EFDLLTVNETSVEPP) are RNA gate. Residues 521 to 549 (ESDASEESGDEQADTPFAPLYSYGNSKRV) form a disordered region. Residues 523–533 (DASEESGDEQA) show a composition bias toward acidic residues.

The protein belongs to the eIF-3 subunit D family. Component of the eukaryotic translation initiation factor 3 (eIF-3) complex.

It is found in the cytoplasm. In terms of biological role, mRNA cap-binding component of the eukaryotic translation initiation factor 3 (eIF-3) complex, which is involved in protein synthesis of a specialized repertoire of mRNAs and, together with other initiation factors, stimulates binding of mRNA and methionyl-tRNAi to the 40S ribosome. The eIF-3 complex specifically targets and initiates translation of a subset of mRNAs involved in cell proliferation. In the eIF-3 complex, eif3d specifically recognizes and binds the 7-methylguanosine cap of a subset of mRNAs. The protein is Eukaryotic translation initiation factor 3 subunit D of Bombyx mori (Silk moth).